Here is a 155-residue protein sequence, read N- to C-terminus: UPF0735 ACT domain-containing protein CA_C1234 (155 aa).

The 76-residue stretch at 79-154 (TISILIEHRR…NVLKVEIVAM (76 aa)) folds into the ACT domain.

This sequence belongs to the UPF0735 family.

In Clostridium acetobutylicum (strain ATCC 824 / DSM 792 / JCM 1419 / IAM 19013 / LMG 5710 / NBRC 13948 / NRRL B-527 / VKM B-1787 / 2291 / W), this protein is UPF0735 ACT domain-containing protein CA_C1234.